The primary structure comprises 518 residues: FAD-dependent monooxygenase tpcD (518 aa).

Residues 1–22 (MQLLGTLSWLYAIQASIGSSKA) form the signal peptide. N61 carries an N-linked (GlcNAc...) asparagine glycan. The FAD-binding PCMH-type domain occupies 75-246 (QSAQPACLVH…TRFDLDVFQQ (172 aa)). H112 bears the Pros-8alpha-FAD histidine mark. Residues N163, N208, N216, and N346 are each glycosylated (N-linked (GlcNAc...) asparagine).

This sequence belongs to the oxygen-dependent FAD-linked oxidoreductase family. It depends on FAD as a cofactor.

It participates in secondary metabolite biosynthesis; terpenoid biosynthesis. Its function is as follows. FAD-dependent monooxygenase; part of the gene cluster that mediates the biosynthesis of terpestacin. The bifunctional terpene synthase tpcA converts isopentenyl diphosphate (IPP) and dimethylallyl diphosphate (DMAPP) into the sesterterpene preterpestacin I. The C-terminal prenyltransferase (PT) domain of tpcA catalyzes formation of GFPP, whereas the N-terminal terpene cyclase (TC) domain catalyzes the cyclization of GFPP into preterpestacin I. The cytochrome P450 monooxygenase tpcB then hydroxylates preterpestacin I to yield 24-hydroxypreterpstacin I (renamed as preterpestacin II) whereas the cytochrome P450 monooxygenase tpcC further hydroxylates preterpestacin II to yield 16,17-dihydroxypreterpestacin II (renamed as preterpestacin III). Finally, the FAD-dependent monooxygenase tpcD converts preterpestacin III into terpestacin. In Cochliobolus heterostrophus (strain C5 / ATCC 48332 / race O) (Southern corn leaf blight fungus), this protein is FAD-dependent monooxygenase tpcD.